Here is a 307-residue protein sequence, read N- to C-terminus: MIFTRLTRFVGHGTGLRLYATAEKSSLATLRKKTGYTFANCKKALEMHNNDLAKAEQWLQEQAQAMGWSKATKLEGRNTTQGLIGIMVKNNIGAMVEVNCETDFVARNQSFQKFVQAASTACVRYMDQIEGDANLTKVGLNSESLKQIKLEDGKSLADHLALMIGTVGENASLNRAICFKAPESINLTGYVHPAPTEEVPLDVPQFGKYGSILAFKHTSADSNGEVAKKVCQHVVGMKPAKIGDKTRDEPAKDKDDETCLIYQEYLADPSYTVAEVLEANNVEVVDFQRFECGEKIKMDDETVRAVN.

The transit peptide at 1–19 (MIFTRLTRFVGHGTGLRLY) directs the protein to the mitochondrion.

The protein belongs to the EF-Ts family.

The protein localises to the mitochondrion. In terms of biological role, associates with the EF-Tu.GDP complex and induces the exchange of GDP to GTP. It remains bound to the aminoacyl-tRNA.EF-Tu.GTP complex up to the GTP hydrolysis stage on the ribosome. The protein is Elongation factor Ts, mitochondrial of Aedes aegypti (Yellowfever mosquito).